A 335-amino-acid chain; its full sequence is Ketol-acid reductoisomerase (NADP(+)) 2 (335 aa).

Residues 1 to 180 (MKTYYEQDAN…GCTRAGVIET (180 aa)) enclose the KARI N-terminal Rossmann domain. Residues 24–27 (YGSQ), arginine 47, serine 51, and 81–84 (DEQQ) each bind NADP(+). Residue histidine 106 is part of the active site. Glycine 132 contributes to the NADP(+) binding site. The KARI C-terminal knotted domain occupies 181 to 326 (TFQEETETDL…EELREMMSWI (146 aa)). Positions 189, 193, 225, and 229 each coordinate Mg(2+). Substrate is bound at residue serine 250.

It belongs to the ketol-acid reductoisomerase family. Requires Mg(2+) as cofactor.

The catalysed reaction is (2R)-2,3-dihydroxy-3-methylbutanoate + NADP(+) = (2S)-2-acetolactate + NADPH + H(+). It carries out the reaction (2R,3R)-2,3-dihydroxy-3-methylpentanoate + NADP(+) = (S)-2-ethyl-2-hydroxy-3-oxobutanoate + NADPH + H(+). It functions in the pathway amino-acid biosynthesis; L-isoleucine biosynthesis; L-isoleucine from 2-oxobutanoate: step 2/4. Its pathway is amino-acid biosynthesis; L-valine biosynthesis; L-valine from pyruvate: step 2/4. Functionally, involved in the biosynthesis of branched-chain amino acids (BCAA). Catalyzes an alkyl-migration followed by a ketol-acid reduction of (S)-2-acetolactate (S2AL) to yield (R)-2,3-dihydroxy-isovalerate. In the isomerase reaction, S2AL is rearranged via a Mg-dependent methyl migration to produce 3-hydroxy-3-methyl-2-ketobutyrate (HMKB). In the reductase reaction, this 2-ketoacid undergoes a metal-dependent reduction by NADPH to yield (R)-2,3-dihydroxy-isovalerate. In Bacillus thuringiensis subsp. konkukian (strain 97-27), this protein is Ketol-acid reductoisomerase (NADP(+)) 2.